Here is a 471-residue protein sequence, read N- to C-terminus: ATP synthase subunit beta (471 aa).

153-160 contributes to the ATP binding site; that stretch reads GGAGVGKT.

It belongs to the ATPase alpha/beta chains family. F-type ATPases have 2 components, CF(1) - the catalytic core - and CF(0) - the membrane proton channel. CF(1) has five subunits: alpha(3), beta(3), gamma(1), delta(1), epsilon(1). CF(0) has three main subunits: a(1), b(2) and c(9-12). The alpha and beta chains form an alternating ring which encloses part of the gamma chain. CF(1) is attached to CF(0) by a central stalk formed by the gamma and epsilon chains, while a peripheral stalk is formed by the delta and b chains.

The protein localises to the cell inner membrane. The catalysed reaction is ATP + H2O + 4 H(+)(in) = ADP + phosphate + 5 H(+)(out). Functionally, produces ATP from ADP in the presence of a proton gradient across the membrane. The catalytic sites are hosted primarily by the beta subunits. This chain is ATP synthase subunit beta, found in Verminephrobacter eiseniae (strain EF01-2).